The primary structure comprises 364 residues: 3'(2'),5'-bisphosphate nucleotidase 1 (364 aa).

D54 serves as the catalytic Proton acceptor. 4 residues coordinate Mg(2+): E77, D141, I143, and D144. The active-site Proton acceptor is T146. Positions 146, 243, 272, 275, 289, and 302 each coordinate adenosine 3',5'-bisphosphate. Positions 243, 272, 275, 289, and 302 each coordinate AMP. D302 lines the Mg(2+) pocket.

It belongs to the inositol monophosphatase superfamily. Mg(2+) is required as a cofactor.

The enzyme catalyses 3'-phosphoadenylyl sulfate + H2O = adenosine 5'-phosphosulfate + phosphate. The catalysed reaction is adenosine 3',5'-bisphosphate + H2O = AMP + phosphate. It catalyses the reaction adenosine 2',5'-bisphosphate + H2O = AMP + phosphate. Phosphatase that converts adenosine 3'-phosphate 5'-phosphosulfate (PAPS) to adenosine 5'-phosphosulfate (APS) and 3'(2')-phosphoadenosine 5'-phosphate (PAP) to AMP. Regulates the flux of sulfur in the sulfur-activation pathway by converting PAPS to APS. Involved in salt tolerance. The protein is 3'(2'),5'-bisphosphate nucleotidase 1 (HAL21) of Candida albicans (strain WO-1) (Yeast).